Consider the following 169-residue polypeptide: Desumoylating isopeptidase 1 (169 aa).

Residues H8–D150 enclose the PPPDE domain. The active site involves H39. The Nuclear export signal 1 motif lies at I84–L92. The active site involves C109. A Nuclear export signal 2 motif is present at residues P140 to I154.

The protein belongs to the DeSI family. In terms of assembly, homodimer.

The protein localises to the cytoplasm. It localises to the nucleus. The enzyme catalyses S-hexadecanoyl-L-cysteinyl-[protein] + H2O = L-cysteinyl-[protein] + hexadecanoate + H(+). Its function is as follows. Protease which deconjugates SUMO1, SUMO2 and SUMO3 from some substrate proteins. Has isopeptidase but not SUMO-processing activity. Collaborates with ubqln4 in the export of ubiquitinated proteins from the nucleus to the cytoplasm. Exhibits palmitoyl protein thioesterase (S-depalmitoylation) activity towards synthetic substrates 4-methylumbelliferyl-6-S-palmitoyl-beta-D-glucopyranoside and S-depalmitoylation probe 5 (DPP-5). The protein is Desumoylating isopeptidase 1 of Xenopus laevis (African clawed frog).